We begin with the raw amino-acid sequence, 913 residues long: ER degradation-enhancing alpha-mannosidase-like protein 3 (913 aa).

The first 15 residues, 1 to 15, serve as a signal peptide directing secretion; the sequence is MGCPAVEARRWGDMW. The N-linked (GlcNAc...) asparagine glycan is linked to Asn-104. The active-site Proton donor is the Glu-132. Asn-181 carries an N-linked (GlcNAc...) asparagine glycan. Asp-279 is a catalytic residue. Glu-373 (proton donor) is an active-site residue. The active site involves Glu-391. Thr-477 is a binding site for Ca(2+). N-linked (GlcNAc...) asparagine glycosylation is present at Asn-497. Residues 660–766 enclose the PA domain; sequence LSKHLAGAQG…KEGNIILDAI (107 aa). Asn-797 carries an N-linked (GlcNAc...) asparagine glycan. Residues 823–895 are disordered; that stretch reads EESPVSQPEV…NKVQPMESIL (73 aa). The segment covering 826-839 has biased composition (low complexity); it reads PVSQPEVPSSDSPS. Over residues 843–866 the composition is skewed to basic and acidic residues; the sequence is RTSERDITPESQEHKTEETEHSPK. A Prevents secretion from ER motif is present at residues 910–913; it reads KDEL.

This sequence belongs to the glycosyl hydrolase 47 family. Ca(2+) is required as a cofactor.

Its subcellular location is the endoplasmic reticulum lumen. It carries out the reaction N(4)-(alpha-D-Man-(1-&gt;2)-alpha-D-Man-(1-&gt;2)-alpha-D-Man-(1-&gt;3)-[alpha-D-Man-(1-&gt;2)-alpha-D-Man-(1-&gt;3)-[alpha-D-Man-(1-&gt;2)-alpha-D-Man-(1-&gt;6)]-alpha-D-Man-(1-&gt;6)]-beta-D-Man-(1-&gt;4)-beta-D-GlcNAc-(1-&gt;4)-beta-D-GlcNAc)-L-asparaginyl-[protein] (N-glucan mannose isomer 9A1,2,3B1,2,3) + 4 H2O = N(4)-(alpha-D-Man-(1-&gt;3)-[alpha-D-Man-(1-&gt;3)-[alpha-D-Man-(1-&gt;6)]-alpha-D-Man-(1-&gt;6)]-beta-D-Man-(1-&gt;4)-beta-D-GlcNAc-(1-&gt;4)-beta-D-GlcNAc)-L-asparaginyl-[protein] (N-glucan mannose isomer 5A1,2) + 4 beta-D-mannose. It catalyses the reaction N(4)-(alpha-D-Man-(1-&gt;2)-alpha-D-Man-(1-&gt;2)-alpha-D-Man-(1-&gt;3)-[alpha-D-Man-(1-&gt;3)-[alpha-D-Man-(1-&gt;2)-alpha-D-Man-(1-&gt;6)]-alpha-D-Man-(1-&gt;6)]-beta-D-Man-(1-&gt;4)-beta-D-GlcNAc-(1-&gt;4)-beta-D-GlcNAc)-L-asparaginyl-[protein] (N-glucan mannose isomer 8A1,2,3B1,3) + 3 H2O = N(4)-(alpha-D-Man-(1-&gt;3)-[alpha-D-Man-(1-&gt;3)-[alpha-D-Man-(1-&gt;6)]-alpha-D-Man-(1-&gt;6)]-beta-D-Man-(1-&gt;4)-beta-D-GlcNAc-(1-&gt;4)-beta-D-GlcNAc)-L-asparaginyl-[protein] (N-glucan mannose isomer 5A1,2) + 3 beta-D-mannose. It participates in protein modification; protein glycosylation. In terms of biological role, may be involved in endoplasmic reticulum-associated degradation (ERAD). The chain is ER degradation-enhancing alpha-mannosidase-like protein 3 (edem3) from Xenopus laevis (African clawed frog).